The sequence spans 780 residues: MSVDDLPPSSASAVTPLGSSVIPIVNKLQDIFAQLGSQSTIALPQVAVVGSQSSGKSSVLEALVGRDFLPRGNDICTRRPLRLQLVQTKPSSDGGSDEEWGEFLHHDPVRRIYDFSEIRREIEAETNRVSGENKGVSDIPIGLKIFSPNVLDISLVDLPGITKVPVGDQPSDIEARIRTMILTYIKEPSCLILAVSPANTDLANSDALQIAGNADPDGHRTIGVITKLDIMDRGTDARNHLLGKTIPLRLGYVGVVNRSQEDILMNRSIKDALVAEEKFFRSRPVYSGLTDRLGVPQLAKKLNQVLVQHIKALLPSLKSRINNALFATAKEYESYGDITESRGGQGALLLSFITKYCEAYSSTLEGKSKEMSTSELSGGARILYIFQSVFVKSLEEVDPCEDLTADDIRTAIQNATGPRSALFVPDVPFEVLVRRQISRLLDPSLQCARFIFDELVKISHQCMMKELQRFPVLQKRMDEVIGNFLREGLEPSQAMIRDLIEMEMDYINTSHPNFIGGTKAVEQAMQTVKSSRIPHPVARPRDTVEPERTASSGSQIKTRSFLGRQANGIITDQAVPTAADAERPAPAGSTSWSGFSSIFRGSDGQAAAKNNLLNKPFSETTQEVYQNLSTIYLKEPPTILKSSETHSEQESVEIEITKLLLKSYYDIVRKNVEDLVPKAIMHFLVNYTKRELHNVFIEKLYRENLIEELLKEPDELAIKRKRTQETLRILQQANRTLDELPLEAESVERGYKIGSEAKHEELPGTRRSRTETNGNGRLHM.

Ser2 is subject to N-acetylserine. Residues 40-315 (TIALPQVAVV…LVQHIKALLP (276 aa)) form the Dynamin-type G domain. The interval 50–57 (GSQSSGKS) is G1 motif. A GTP-binding site is contributed by 50–57 (GSQSSGKS). Positions 76–78 (CTR) are G2 motif. Residues 157 to 160 (DLPG) are G3 motif. Residues 157–161 (DLPGI) and 226–229 (TKLD) each bind GTP. Positions 226 to 229 (TKLD) are G4 motif. Residues 256–259 (VNRS) are G5 motif. Disordered stretches follow at residues 536–558 (PVARPRDTVEPERTASSGSQIKT) and 573–592 (QAVPTAADAERPAPAGSTSW). A compositionally biased stretch (basic and acidic residues) spans 539 to 548 (RPRDTVEPER). Residues 549–558 (TASSGSQIKT) show a composition bias toward polar residues. The GED domain maps to 654–745 (IEITKLLLKS…TLDELPLEAE (92 aa)). A compositionally biased stretch (basic and acidic residues) spans 753–770 (IGSEAKHEELPGTRRSRT). Residues 753–780 (IGSEAKHEELPGTRRSRTETNGNGRLHM) are disordered. The span at 771 to 780 (ETNGNGRLHM) shows a compositional bias: polar residues.

It belongs to the TRAFAC class dynamin-like GTPase superfamily. Dynamin/Fzo/YdjA family. As to quaternary structure, interacts with ARC5 on peroxisomes and ELM1 on mitochondria.

The protein localises to the mitochondrion. It is found in the peroxisome. Functionally, involved in the control of mitochondrial and peroxisomal division and morphology. This chain is Dynamin-related protein 3B (DRP3B), found in Arabidopsis thaliana (Mouse-ear cress).